Here is an 883-residue protein sequence, read N- to C-terminus: Valine--tRNA ligase (883 aa).

Positions 46-56 match the 'HIGH' region motif; that stretch reads PNVTGKLHLGH. Residues 520 to 524 carry the 'KMSKS' region motif; the sequence is KMSKS. Lys-523 provides a ligand contact to ATP. A coiled-coil region spans residues 809–844; sequence LVDLLNVEEELARLEKELAKWQKELDMVGKKLSNER.

Belongs to the class-I aminoacyl-tRNA synthetase family. ValS type 1 subfamily. In terms of assembly, monomer.

The protein localises to the cytoplasm. It carries out the reaction tRNA(Val) + L-valine + ATP = L-valyl-tRNA(Val) + AMP + diphosphate. Catalyzes the attachment of valine to tRNA(Val). As ValRS can inadvertently accommodate and process structurally similar amino acids such as threonine, to avoid such errors, it has a 'posttransfer' editing activity that hydrolyzes mischarged Thr-tRNA(Val) in a tRNA-dependent manner. This Streptococcus pneumoniae (strain ATCC BAA-255 / R6) protein is Valine--tRNA ligase.